The sequence spans 196 residues: CMRF35-like molecule 2 (196 aa).

A signal peptide spans 1–17 (MRLCAGLLLLCFQGCLS). The region spanning 18–122 (LTGPGSVSGY…DSWSRDPSVS (105 aa)) is the Ig-like V-type domain. The Extracellular portion of the chain corresponds to 18–171 (LTGPGSVSGY…QLWSLLSSIQ (154 aa)). The cysteines at positions 36 and 104 are disulfide-linked. An N-linked (GlcNAc...) asparagine glycan is attached at Asn-84. A helical transmembrane segment spans residues 172-192 (FQVLVFLKLPLFLSMLCAIFW). Residues 193 to 196 (VNRL) lie on the Cytoplasmic side of the membrane.

This sequence belongs to the CD300 family. Interacts with TYROBP.

It localises to the cell membrane. Probably acts as an activating receptor. The polypeptide is CMRF35-like molecule 2 (Cd300e) (Mus musculus (Mouse)).